Reading from the N-terminus, the 84-residue chain is Esculentin-1ISb (84 aa).

The signal sequence occupies residues 1 to 22 (MFTLKKPLLLIVLLGIISLSLC). The propeptide at 23 to 36 (EQERAADEDEGTKI) is removed in mature form. Residues cysteine 78 and cysteine 84 are joined by a disulfide bond.

In terms of tissue distribution, expressed by the skin glands.

The protein localises to the secreted. Has antimicrobial activity against Gram-negative bacterium E.coli ATCC 8739 (MIC=3.1 ug), against Gram positive bacteria S.aureus ATCC 6538 (MIC=3.1 ug), methicillin-resistant S.aureus ATCC 43300 (MIC=12.5 ug), B.subtilis ATCC 6633 (MIC=12.5 ug) and against fungus C.albicans ATCC 90028 (MIC=50 ug). In Odorrana ishikawae (Ishikawa's frog), this protein is Esculentin-1ISb.